Consider the following 256-residue polypeptide: MDDSMDLDLDCVIAQPSSTIVMMPLSPISTRKRRRHPMNKRRYAKRRFTPVEPNDIIMCDKPTHCIRLVFDQSLRWVHFDGIKNILTDYDVIFNPDLHVTVALVCAGNGVTFSDLTPLTFILADMLLEFNGIFTLGQTLVIGAREYHWLPQELKTNVGKAIPQAKEWLVDHGYNVYHTGLPTHMSLAKLHSLDFVQQSYVGSKFFIKHSHTTEYAMPVCLQVIAIDGEKVDGRSKPLFQYPIHNHYRHYRACFPGR.

The protein localises to the host nucleus. The protein resides in the host nucleolus. Its subcellular location is the host cytoplasm. Its function is as follows. Plays a role in the inhibition of host innate immunity by inhibiting the interaction between host IKBKE and MAVS. In turn, this inhibition prevents the production of host interferon beta. Additionally, may also interfere with host antiviral response within the nucleus. This Bat coronavirus HKU5 (BtCoV) protein is Non-structural protein ORF4b (ORF4b).